A 217-amino-acid polypeptide reads, in one-letter code: Small ribosomal subunit protein uS3 (217 aa).

The KH type-2 domain occupies 38–106 (IRKFVQKELA…QVHINIIEIK (69 aa)).

Belongs to the universal ribosomal protein uS3 family. As to quaternary structure, part of the 30S ribosomal subunit. Forms a tight complex with proteins S10 and S14.

Functionally, binds the lower part of the 30S subunit head. Binds mRNA in the 70S ribosome, positioning it for translation. In Streptococcus gordonii (strain Challis / ATCC 35105 / BCRC 15272 / CH1 / DL1 / V288), this protein is Small ribosomal subunit protein uS3.